The primary structure comprises 341 residues: GTP 3',8-cyclase (341 aa).

One can recognise a Radical SAM core domain in the interval 11–231 (KRERPLRDLR…DLINQHMPTE (221 aa)). Arg20 contacts GTP. Positions 27 and 31 each coordinate [4Fe-4S] cluster. Residue Tyr33 participates in S-adenosyl-L-methionine binding. Cys34 is a [4Fe-4S] cluster binding site. Position 75 (Arg75) interacts with GTP. An S-adenosyl-L-methionine-binding site is contributed by Gly79. Thr106 serves as a coordination point for GTP. An S-adenosyl-L-methionine-binding site is contributed by Ser130. GTP is bound at residue Lys167. Met201 serves as a coordination point for S-adenosyl-L-methionine. [4Fe-4S] cluster-binding residues include Cys265 and Cys268. 270 to 272 (RAR) contacts GTP. Residue Cys282 participates in [4Fe-4S] cluster binding.

Belongs to the radical SAM superfamily. MoaA family. As to quaternary structure, monomer and homodimer. [4Fe-4S] cluster is required as a cofactor.

It carries out the reaction GTP + AH2 + S-adenosyl-L-methionine = (8S)-3',8-cyclo-7,8-dihydroguanosine 5'-triphosphate + 5'-deoxyadenosine + L-methionine + A + H(+). Its pathway is cofactor biosynthesis; molybdopterin biosynthesis. Functionally, catalyzes the cyclization of GTP to (8S)-3',8-cyclo-7,8-dihydroguanosine 5'-triphosphate. The protein is GTP 3',8-cyclase of Bacillus velezensis (strain DSM 23117 / BGSC 10A6 / LMG 26770 / FZB42) (Bacillus amyloliquefaciens subsp. plantarum).